Consider the following 428-residue polypeptide: Ribosomal RNA small subunit methyltransferase B (428 aa).

S-adenosyl-L-methionine is bound by residues 253 to 259 (CAAPGGK), Asp-276, Asp-302, and Asp-321. Cys-374 functions as the Nucleophile in the catalytic mechanism.

Belongs to the class I-like SAM-binding methyltransferase superfamily. RsmB/NOP family.

Its subcellular location is the cytoplasm. The catalysed reaction is cytidine(967) in 16S rRNA + S-adenosyl-L-methionine = 5-methylcytidine(967) in 16S rRNA + S-adenosyl-L-homocysteine + H(+). Functionally, specifically methylates the cytosine at position 967 (m5C967) of 16S rRNA. The protein is Ribosomal RNA small subunit methyltransferase B of Enterobacter sp. (strain 638).